Here is a 388-residue protein sequence, read N- to C-terminus: Beta-1,4-galactosyltransferase 5 (388 aa).

Residues 1-14 are Cytoplasmic-facing; sequence MRARRGLLRLPRRS. The chain crosses the membrane as a helical; Signal-anchor for type II membrane protein span at residues 15–35; it reads LLAALFFFSLSSSLLYFVYVA. Topologically, residues 36 to 388 are lumenal; that stretch reads PGIVNTYLFM…TPELAQVNEY (353 aa). Asn-77, Asn-81, Asn-90, Asn-111, and Asn-128 each carry an N-linked (GlcNAc...) asparagine glycan. An intrachain disulfide couples Cys-114 to Cys-158. UDP-alpha-D-galactose is bound by residues 169–173, 208–210, 235–236, Tyr-264, and Trp-296; these read PFRNR, FNR, and VD. A disulfide bond links Cys-229 and Cys-248. Residue Asp-236 coordinates Mn(2+). N-acetyl-D-glucosamine is bound at residue 298 to 301; the sequence is GEDD. His-329 serves as a coordination point for Mn(2+). 329 to 330 contacts UDP-alpha-D-galactose; it reads HH. Residue Arg-340 participates in N-acetyl-D-glucosamine binding. Asn-364 and Asn-373 each carry an N-linked (GlcNAc...) asparagine glycan.

The protein belongs to the glycosyltransferase 7 family. Requires Mn(2+) as cofactor. As to expression, ubiquitously expressed.

Its subcellular location is the golgi apparatus. It localises to the golgi stack membrane. It carries out the reaction a beta-D-glucosyl-(1&lt;-&gt;1')-N-acylsphing-4-enine + UDP-alpha-D-galactose = a beta-D-Gal-(1-&gt;4)-beta-D-Glc-(1&lt;-&gt;1)-Cer(d18:1(4E)) + UDP + H(+). It participates in protein modification; protein glycosylation. It functions in the pathway sphingolipid metabolism. Catalyzes the synthesis of lactosylceramide (LacCer) via the transfer of galactose from UDP-galactose to glucosylceramide (GlcCer). LacCer is the starting point in the biosynthesis of all gangliosides (membrane-bound glycosphingolipids) which play pivotal roles in the CNS including neuronal maturation and axonal and myelin formation. Plays a role in the glycosylation of BMPR1A and regulation of its protein stability. Essential for extraembryonic development during early embryogenesis. The protein is Beta-1,4-galactosyltransferase 5 of Homo sapiens (Human).